The following is a 313-amino-acid chain: Putative olfactory receptor 2B3 (313 aa).

The Extracellular portion of the chain corresponds to 1–25; it reads MNWENESSPKEFILLGFSDRAWLQM. Residue Asn5 is glycosylated (N-linked (GlcNAc...) asparagine). A helical transmembrane segment spans residues 26–49; it reads PLFVVLLISYTITIFGNVSIMMVC. The Cytoplasmic segment spans residues 50 to 57; the sequence is ILDPKLHT. Residues 58–79 traverse the membrane as a helical segment; it reads PMYFFLTNLSILDLCYTTTTVP. Topologically, residues 80-100 are extracellular; it reads HMLVNIGCNKKTISYAGCVAH. Cysteines 97 and 189 form a disulfide. Residues 101-120 traverse the membrane as a helical segment; sequence LIIFLALGATECLLLAVMSF. Topologically, residues 121 to 139 are cytoplasmic; sequence DRYVAVCRPLHYVVIMNYW. A helical transmembrane segment spans residues 140 to 158; the sequence is FCLRMAAFSWLIGFGNSVL. The Extracellular segment spans residues 159 to 195; that stretch reads QSSLTLNMPRCGHQEVDHFFCEVPALLKLSCADTKPI. The chain crosses the membrane as a helical span at residues 196–219; it reads EAELFFFSVLILLIPVTLILISYG. The Cytoplasmic segment spans residues 220–236; it reads FIAQAVLKIRSAEGRQK. The chain crosses the membrane as a helical span at residues 237–259; sequence AFGTCGSHMIVVSLFYGTAIYMY. Topologically, residues 260–272 are extracellular; sequence LQPPSSTSKDWGK. The chain crosses the membrane as a helical span at residues 273 to 292; the sequence is MVSLFYGIITSMLNSLIYSL. Topologically, residues 293–313 are cytoplasmic; that stretch reads RNKDMKEAFKRLMPRIFFCKK.

It belongs to the G-protein coupled receptor 1 family.

The protein resides in the cell membrane. Odorant receptor. This chain is Putative olfactory receptor 2B3 (OR2B3), found in Homo sapiens (Human).